Here is an 89-residue protein sequence, read N- to C-terminus: Sec translocon accessory complex subunit YrbF (89 aa).

The helical transmembrane segment at 4 to 24 (GTLGTLVPIILMFAVLYFLLI) threads the bilayer.

It belongs to the YajC family. In terms of assembly, part of the SecDF-YidC-YajC translocase complex. The SecDF-YidC-YajC translocase forms a supercomplex with SecYEG, called the holo-translocon (HTL).

It is found in the cell membrane. The SecYEG-SecDF-YajC-YidC holo-translocon (HTL) protein secretase/insertase is a supercomplex required for protein secretion, insertion of proteins into membranes, and assembly of membrane protein complexes. While the SecYEG complex is essential for assembly of a number of proteins and complexes, the SecDF-YajC-YidC subcomplex facilitates these functions. The chain is Sec translocon accessory complex subunit YrbF (yrbF) from Bacillus subtilis (strain 168).